A 79-amino-acid chain; its full sequence is uncharacterized protein (79 aa).

The signal sequence occupies residues 1–24 (MNKFLNLIGLAFVLVLCAFSCSNA). The region spanning 32–78 (SWHVAQKGYTCYDMATSCKVTLDQFMRTNKLDNNACKLVQIGRKYCC) is the LysM domain.

Its subcellular location is the secreted. This is an uncharacterized protein from Dictyostelium discoideum (Social amoeba).